Reading from the N-terminus, the 642-residue chain is Threonine--tRNA ligase (642 aa).

In terms of domain architecture, TGS spans 1 to 61 (MPIITLPDGS…EHDASLEIIT (61 aa)). Residues 244-535 (DHRKIGKQLD…LIEEYAGFFP (292 aa)) are catalytic. Residues Cys-335, His-386, and His-512 each contribute to the Zn(2+) site.

The protein belongs to the class-II aminoacyl-tRNA synthetase family. As to quaternary structure, homodimer. Zn(2+) serves as cofactor.

It localises to the cytoplasm. It catalyses the reaction tRNA(Thr) + L-threonine + ATP = L-threonyl-tRNA(Thr) + AMP + diphosphate + H(+). Functionally, catalyzes the attachment of threonine to tRNA(Thr) in a two-step reaction: L-threonine is first activated by ATP to form Thr-AMP and then transferred to the acceptor end of tRNA(Thr). Also edits incorrectly charged L-seryl-tRNA(Thr). The sequence is that of Threonine--tRNA ligase from Vibrio cholerae serotype O1 (strain M66-2).